We begin with the raw amino-acid sequence, 1578 residues long: DNA-directed RNA polymerase subunit beta' (1578 aa).

Zn(2+) is bound by residues cysteine 101, cysteine 103, cysteine 115, and cysteine 118. Mg(2+) is bound by residues aspartate 1286, aspartate 1288, and aspartate 1290.

This sequence belongs to the RNA polymerase beta' chain family. RpoC1 subfamily. In terms of assembly, in plastids the minimal PEP RNA polymerase catalytic core is composed of four subunits: alpha, beta, beta', and beta''. When a (nuclear-encoded) sigma factor is associated with the core the holoenzyme is formed, which can initiate transcription. Mg(2+) is required as a cofactor. The cofactor is Zn(2+).

The protein localises to the plastid. The protein resides in the chloroplast. The enzyme catalyses RNA(n) + a ribonucleoside 5'-triphosphate = RNA(n+1) + diphosphate. In terms of biological role, DNA-dependent RNA polymerase catalyzes the transcription of DNA into RNA using the four ribonucleoside triphosphates as substrates. The protein is DNA-directed RNA polymerase subunit beta' of Tupiella akineta (Green alga).